We begin with the raw amino-acid sequence, 680 residues long: Translation factor GUF1 homolog, chloroplastic (680 aa).

Residues 1–51 (MATATASRLAVPAPRTSPQAPGRRRPAAPLPSAPPRPRALSAAPRGRVVCP) constitute a chloroplast transit peptide. The disordered stretch occupies residues 1–68 (MATATASRLA…ASTTDAGQDR (68 aa)). Over residues 28–37 (APLPSAPPRP) the composition is skewed to pro residues. Residues 38–60 (RALSAAPRGRVVCPAAPASSPAS) are compositionally biased toward low complexity. The region spanning 75-256 (SNIRNFSIIA…AIVTKIPPPQ (182 aa)) is the tr-type G domain. GTP is bound by residues 84-91 (AHIDHGKS), 149-153 (DTPGH), and 203-206 (NKID).

It belongs to the TRAFAC class translation factor GTPase superfamily. Classic translation factor GTPase family. LepA subfamily.

It localises to the plastid. The protein localises to the chloroplast. The enzyme catalyses GTP + H2O = GDP + phosphate + H(+). Promotes chloroplast protein synthesis. May act as a fidelity factor of the translation reaction, by catalyzing a one-codon backward translocation of tRNAs on improperly translocated ribosomes. This chain is Translation factor GUF1 homolog, chloroplastic, found in Oryza sativa subsp. japonica (Rice).